The following is a 293-amino-acid chain: Probable tRNA-splicing endonuclease subunit Sen2 (293 aa).

Residues Y157, H165, and K204 contribute to the active site. The helical transmembrane segment at 267–287 threads the bilayer; that stretch reads VVFNHWGVILGFTVLSGLLVY.

The protein belongs to the tRNA-intron endonuclease family. In terms of assembly, tRNA splicing endonuclease is a heterotetramer composed of SEN2, SEN15, SEN34/LENG5 and SEN54.

It is found in the nucleus. It localises to the membrane. It carries out the reaction pretRNA = a 3'-half-tRNA molecule with a 5'-OH end + a 5'-half-tRNA molecule with a 2',3'-cyclic phosphate end + an intron with a 2',3'-cyclic phosphate and a 5'-hydroxyl terminus.. In terms of biological role, constitutes one of the two catalytic subunit of the tRNA-splicing endonuclease complex, a complex responsible for identification and cleavage of the splice sites in pre-tRNA. It cleaves pre-tRNA at the 5'- and 3'-splice sites to release the intron. The products are an intron and two tRNA half-molecules bearing 2',3'-cyclic phosphate and 5'-OH termini. There are no conserved sequences at the splice sites, but the intron is invariably located at the same site in the gene, placing the splice sites an invariant distance from the constant structural features of the tRNA body. Probably carries the active site for 5'-splice site cleavage. This Oryza sativa subsp. japonica (Rice) protein is Probable tRNA-splicing endonuclease subunit Sen2.